The following is a 471-amino-acid chain: MEYLPLFADLRRRPVLVVGGGEVAARKIQLLMRAGAQIIVAARALCPALEEIRQAGGLSWLGESFEPAMLDDVFLVIAATDDAALNARVSQCAEQRHLLANVVDDQPYCSFIFPSIIDRAPIVVAISSSGTAPVLARILREKLESILPTFLGPMAAIAGAWRGRVKQRIRSMAGRRRFWEKALNGRFASLMAQGRLEQAEQALEQALNAGPEHGGEVALVGAGPGDSGLLTLRGLQLMQQADVVLYDYLVSPEVLELVRRDAERICAGKRVGEHSMPQQEINRLLVTLAQQGKKVVRLKGGDPFIFGRGGEELQAVATAGIPFQVVSGITAAAGATAYAGIPLTHREHAQSITFITGHLRDGADALDWQALARGRQTLAIYMGVVKAAEISSQLIRHGRSAQTPVAVISRGTCSDQYVQTGTLEALDQLAQKAPTPALVVIGEVVALHHEINWFGQQNLAAQKRASVVNLA.

Residues 1 to 203 (MEYLPLFADL…GRLEQAEQAL (203 aa)) are precorrin-2 dehydrogenase /sirohydrochlorin ferrochelatase. NAD(+) contacts are provided by residues 22-23 (EV) and 43-44 (RA). S128 is modified (phosphoserine). A uroporphyrinogen-III C-methyltransferase region spans residues 215–471 (GEVALVGAGP…QKRASVVNLA (257 aa)). P224 is a binding site for S-adenosyl-L-methionine. D247 functions as the Proton acceptor in the catalytic mechanism. Catalysis depends on K269, which acts as the Proton donor. S-adenosyl-L-methionine is bound by residues 300–302 (GGD), I305, 330–331 (TA), M382, and G411.

In the N-terminal section; belongs to the precorrin-2 dehydrogenase / sirohydrochlorin ferrochelatase family. The protein in the C-terminal section; belongs to the precorrin methyltransferase family.

It catalyses the reaction uroporphyrinogen III + 2 S-adenosyl-L-methionine = precorrin-2 + 2 S-adenosyl-L-homocysteine + H(+). The enzyme catalyses precorrin-2 + NAD(+) = sirohydrochlorin + NADH + 2 H(+). It carries out the reaction siroheme + 2 H(+) = sirohydrochlorin + Fe(2+). Its pathway is cofactor biosynthesis; adenosylcobalamin biosynthesis; precorrin-2 from uroporphyrinogen III: step 1/1. It functions in the pathway cofactor biosynthesis; adenosylcobalamin biosynthesis; sirohydrochlorin from precorrin-2: step 1/1. The protein operates within porphyrin-containing compound metabolism; siroheme biosynthesis; precorrin-2 from uroporphyrinogen III: step 1/1. It participates in porphyrin-containing compound metabolism; siroheme biosynthesis; siroheme from sirohydrochlorin: step 1/1. Its pathway is porphyrin-containing compound metabolism; siroheme biosynthesis; sirohydrochlorin from precorrin-2: step 1/1. Its function is as follows. Multifunctional enzyme that catalyzes the SAM-dependent methylations of uroporphyrinogen III at position C-2 and C-7 to form precorrin-2 via precorrin-1. Then it catalyzes the NAD-dependent ring dehydrogenation of precorrin-2 to yield sirohydrochlorin. Finally, it catalyzes the ferrochelation of sirohydrochlorin to yield siroheme. This is Siroheme synthase from Sodalis glossinidius (strain morsitans).